The sequence spans 188 residues: Adenine phosphoribosyltransferase (188 aa).

Belongs to the purine/pyrimidine phosphoribosyltransferase family. As to quaternary structure, homodimer.

Its subcellular location is the cytoplasm. It catalyses the reaction AMP + diphosphate = 5-phospho-alpha-D-ribose 1-diphosphate + adenine. It participates in purine metabolism; AMP biosynthesis via salvage pathway; AMP from adenine: step 1/1. In terms of biological role, catalyzes a salvage reaction resulting in the formation of AMP, that is energically less costly than de novo synthesis. The sequence is that of Adenine phosphoribosyltransferase from Paraburkholderia xenovorans (strain LB400).